Here is a 305-residue protein sequence, read N- to C-terminus: Coiled-coil domain-containing protein 50 (305 aa).

Alanine 2 bears the N-acetylalanine mark. Serine 5 is modified (phosphoserine). A coiled-coil region spans residues 86–130 (EIAQEIQEKLTIEAERRRIQEKKDEDIARLLQEKELQEEKRRKKH). 2 disordered regions span residues 122-142 (QEEK…VFGD) and 218-305 (KKAK…HNKQ). Composition is skewed to basic and acidic residues over residues 218-239 (KKAK…ECKL) and 247-263 (KSKE…DRPS). Residues 279–305 (THFTNQHSTTWHLPKSESSQKGFHNKQ) show a composition bias toward polar residues.

As to quaternary structure, interacts with RNF126. In terms of processing, phosphorylated on tyrosine residues. Widely expressed.

Its subcellular location is the cytoplasm. Functionally, involved in EGFR signaling. This Mus musculus (Mouse) protein is Coiled-coil domain-containing protein 50 (Ccdc50).